A 300-amino-acid chain; its full sequence is 33 kDa chaperonin (300 aa).

Intrachain disulfides connect cysteine 235-cysteine 237 and cysteine 269-cysteine 272.

This sequence belongs to the HSP33 family. Under oxidizing conditions two disulfide bonds are formed involving the reactive cysteines. Under reducing conditions zinc is bound to the reactive cysteines and the protein is inactive.

The protein localises to the cytoplasm. Functionally, redox regulated molecular chaperone. Protects both thermally unfolding and oxidatively damaged proteins from irreversible aggregation. Plays an important role in the bacterial defense system toward oxidative stress. This chain is 33 kDa chaperonin, found in Pseudomonas fluorescens (strain ATCC BAA-477 / NRRL B-23932 / Pf-5).